A 335-amino-acid polypeptide reads, in one-letter code: Protein-arginine kinase (335 aa).

The Phosphagen kinase C-terminal domain occupies 20 to 243 (IVMSSRIRLA…QQIINEEMQI (224 aa)). ATP-binding positions include 23 to 27 (SSRIR), H81, R114, 165 to 169 (RASVM), and 196 to 201 (RGIYGE).

Belongs to the ATP:guanido phosphotransferase family.

It catalyses the reaction L-arginyl-[protein] + ATP = N(omega)-phospho-L-arginyl-[protein] + ADP + H(+). In terms of biological role, catalyzes the specific phosphorylation of arginine residues in proteins. The polypeptide is Protein-arginine kinase (Staphylococcus haemolyticus (strain JCSC1435)).